We begin with the raw amino-acid sequence, 294 residues long: NAD kinase (294 aa).

The Proton acceptor role is filled by aspartate 74. Residues 74-75, 148-149, histidine 159, arginine 176, aspartate 178, and 189-194 each bind NAD(+); these read DG, NE, and TAYSLS.

It belongs to the NAD kinase family. It depends on a divalent metal cation as a cofactor.

The protein resides in the cytoplasm. It carries out the reaction NAD(+) + ATP = ADP + NADP(+) + H(+). Functionally, involved in the regulation of the intracellular balance of NAD and NADP, and is a key enzyme in the biosynthesis of NADP. Catalyzes specifically the phosphorylation on 2'-hydroxyl of the adenosine moiety of NAD to yield NADP. In Pseudoalteromonas translucida (strain TAC 125), this protein is NAD kinase.